The sequence spans 551 residues: Adenylosuccinate synthetase (551 aa).

GTP-binding positions include 131–137 and 159–161; these read GDEGKGK and GHT. The Proton acceptor role is filled by D132. Mg(2+) contacts are provided by D132 and G159. IMP-binding positions include 132-135, 157-160, T248, R262, N339, T354, and R418; these read DEGK and NAGH. H160 functions as the Proton donor in the catalytic mechanism. A substrate-binding site is contributed by 414–420; that stretch reads TTTGRAR. GTP contacts are provided by residues R420, 446-448, and 528-530; these read KLD and GVG.

This sequence belongs to the adenylosuccinate synthetase family. Homodimer. Requires Mg(2+) as cofactor.

It is found in the cytoplasm. The enzyme catalyses IMP + L-aspartate + GTP = N(6)-(1,2-dicarboxyethyl)-AMP + GDP + phosphate + 2 H(+). Its pathway is purine metabolism; AMP biosynthesis via de novo pathway; AMP from IMP: step 1/2. Its function is as follows. Plays an important role in the de novo pathway and in the salvage pathway of purine nucleotide biosynthesis. Catalyzes the first committed step in the biosynthesis of AMP from IMP. The chain is Adenylosuccinate synthetase from Phytophthora infestans (strain T30-4) (Potato late blight agent).